The sequence spans 426 residues: MNKSESLYAAAQQLIPGGVNSPVRAFNGVGGTPLFIERADGAYLYDADEQAYIDYVGSWGPMVLGHNHPAIRDAVIAAAERGLSFGAPTEMEVQMARLVTSLVPSMDMVRMVNSGTEATMSAIRLARGYTGRDKIIKFEGCYHGHADCLLVKAGSGALTLGQPNSPGVPADFARHTLTCVYNDLSSVRAAFEQYPDEIAAIIVEPVAGNMNCVPPLPDFLPGLRALCDEFGALFIIDEVMTGFRVALAGAQSHYGVVPDLTCLGKIIGGGMPVGAFGGKREVMQALAPTGPVYQAGTLSGNPIAMAAGFACLTEVAKPGVHEKLTALTNQLAEGLLAAAKAENIPLVVNQAGGMFGLFFTDAESVTCYQDVMKCDVERFKLFFHMMLEEGVYLAPSAFEAGFMSLAHTPQDIDRTIEAAQLCFSRL.

Lys265 carries the N6-(pyridoxal phosphate)lysine modification.

This sequence belongs to the class-III pyridoxal-phosphate-dependent aminotransferase family. HemL subfamily. In terms of assembly, homodimer. It depends on pyridoxal 5'-phosphate as a cofactor.

Its subcellular location is the cytoplasm. It catalyses the reaction (S)-4-amino-5-oxopentanoate = 5-aminolevulinate. It participates in porphyrin-containing compound metabolism; protoporphyrin-IX biosynthesis; 5-aminolevulinate from L-glutamyl-tRNA(Glu): step 2/2. This chain is Glutamate-1-semialdehyde 2,1-aminomutase, found in Pectobacterium carotovorum subsp. carotovorum (strain PC1).